Consider the following 647-residue polypeptide: Type II methyltransferase M.FokI (647 aa).

2 consecutive short sequence motifs (adenine-specific methylase) follow at residues 218–221 and 548–551; these read DPPY.

The protein belongs to the N(4)/N(6)-methyltransferase family. Monomer.

It catalyses the reaction a 2'-deoxyadenosine in DNA + S-adenosyl-L-methionine = an N(6)-methyl-2'-deoxyadenosine in DNA + S-adenosyl-L-homocysteine + H(+). An alpha subtype methylase that recognizes the asymmetric double-stranded sequence 5'-GGATG-3', methylates A-3 of both strands, and protects the DNA from cleavage by the FokI endonuclease. The polypeptide is Type II methyltransferase M.FokI (Planomicrobium okeanokoites (Planococcus okeanokoites)).